The following is a 115-amino-acid chain: Large ribosomal subunit protein uL24 (115 aa).

Belongs to the universal ribosomal protein uL24 family. In terms of assembly, part of the 50S ribosomal subunit.

In terms of biological role, one of two assembly initiator proteins, it binds directly to the 5'-end of the 23S rRNA, where it nucleates assembly of the 50S subunit. One of the proteins that surrounds the polypeptide exit tunnel on the outside of the subunit. In Deinococcus deserti (strain DSM 17065 / CIP 109153 / LMG 22923 / VCD115), this protein is Large ribosomal subunit protein uL24.